A 158-amino-acid polypeptide reads, in one-letter code: Regenerating islet-derived protein 4 (158 aa).

The signal sequence occupies residues methionine 1–glycine 22. Cysteine 30 and cysteine 41 are disulfide-bonded. The region spanning histidine 37–lysine 155 is the C-type lectin domain. Asparagine 50 carries an N-linked (GlcNAc...) asparagine glycan. Cystine bridges form between cysteine 58-cysteine 154 and cysteine 129-cysteine 146. Residues aspartate 98–glutamine 103 and asparagine 135–asparagine 137 each bind a carbohydrate.

Highly expressed in the gastrointestinal tract including the duodenum, jejunum, ileum, ileocecum, appendix, descending colon, pancreas and small intestine. Weakly expressed in normal colon and stomach. Strongly expressed in most colorectal tumors than in normal colon. Preferentially expressed in mucinous tumors and in some cases neuro-endocrine tumors. Expressed in mucus-secreting cells and enterocyte-like cells. In small intestine expressed at the basal perinuclear zone of goblet cells.

It localises to the secreted. Functionally, calcium-independent lectin displaying mannose-binding specificity and able to maintain carbohydrate recognition activity in an acidic environment. May be involved in inflammatory and metaplastic responses of the gastrointestinal epithelium. The chain is Regenerating islet-derived protein 4 (REG4) from Homo sapiens (Human).